A 239-amino-acid polypeptide reads, in one-letter code: uncharacterized protein (239 aa).

The N-terminal stretch at 1 to 19 (MPLLHRTIIFLQLLGTISS) is a signal peptide. N-linked (GlcNAc...) asparagine glycans are attached at residues Asn44, Asn58, Asn72, Asn92, Asn109, Asn136, Asn172, Asn192, and Asn213.

The protein resides in the secreted. This is an uncharacterized protein from Caenorhabditis elegans.